Reading from the N-terminus, the 1633-residue chain is Laminin-like protein lam-2 (1633 aa).

An N-terminal signal peptide occupies residues 1-19 (MTSILWLFSLAVLWHMGQP). The region spanning 47–286 (QPQRCVPDFV…AISDFAVGGR (240 aa)) is the Laminin N-terminal domain. N-linked (GlcNAc...) asparagine glycans are attached at residues Asn116 and Asn136. 16 disulfides stabilise this stretch: Cys287-Cys296, Cys289-Cys310, Cys312-Cys321, Cys324-Cys344, Cys347-Cys356, Cys349-Cys372, Cys375-Cys384, Cys387-Cys400, Cys403-Cys415, Cys405-Cys421, Cys423-Cys432, Cys435-Cys447, Cys450-Cys464, Cys452-Cys471, Cys473-Cys482, and Cys485-Cys500. 4 Laminin EGF-like domains span residues 287-346 (CKCN…ECIA), 347-402 (CNCS…YCVA), 403-449 (CGCN…GCKN), and 450-502 (CGCE…GCTP). Asn348 is a glycosylation site (N-linked (GlcNAc...) asparagine). Residues 503-512 (CFCFGHSSIC) enclose the Laminin EGF-like 5; first part domain. Asn522, Asn658, and Asn740 each carry an N-linked (GlcNAc...) asparagine glycan. Residues 529–701 (QDKQKWAGQN…NPKQATWIEH (173 aa)) enclose the Laminin IV type A domain. The region spanning 702-747 (CECLPGFVGQFCESCESGFRRETKFGGPFNHCIKCDCHNHSNSCEA) is the Laminin EGF-like 5; second part domain. Cystine bridges form between Cys736–Cys745, Cys738–Cys752, Cys754–Cys763, Cys766–Cys782, Cys785–Cys803, Cys806–Cys815, Cys818–Cys832, Cys835–Cys849, Cys837–Cys856, Cys859–Cys868, Cys871–Cys887, Cys890–Cys909, Cys892–Cys916, Cys918–Cys927, Cys930–Cys943, Cys946–Cys958, Cys948–Cys965, Cys967–Cys976, Cys979–Cys991, Cys994–Cys1006, Cys996–Cys1013, Cys1015–Cys1024, and Cys1027–Cys1038. The Laminin EGF-like 6; truncated domain maps to 752-784 (CICEHNTAGDTCERCARGYYGDALQGTEEDCQK). 5 consecutive Laminin EGF-like domains span residues 785–834 (CPCP…ECVE), 835–889 (CACS…NCQS), 890–945 (CGCF…GCQE), 946–993 (CNCD…GCQP), and 994–1040 (CDCE…GCLP). An N-linked (GlcNAc...) asparagine glycan is attached at Asn936. 7 N-linked (GlcNAc...) asparagine glycosylation sites follow: Asn1077, Asn1183, Asn1226, Asn1259, Asn1336, Asn1452, and Asn1528.

Its function is as follows. During the formation of neuromuscular junctions at the larval stage, negatively regulates membrane protrusion from body wall muscles, probably downstream of the integrin complex formed by pat-2 and pat-3. The protein is Laminin-like protein lam-2 (lam-2) of Caenorhabditis elegans.